Here is a 417-residue protein sequence, read N- to C-terminus: Spermidine/putrescine import ATP-binding protein PotA (417 aa).

Residues 5-308 form the ABC transporter domain; that stretch reads IILKDLTKVF…PANRFVAQFV (304 aa). An ATP-binding site is contributed by 37 to 44; that stretch reads GPSGCGKT. The insert stretch occupies residues 105-177; the sequence is DFNSKIKDNL…TALKCKKINK (73 aa).

Belongs to the ABC transporter superfamily. Spermidine/putrescine importer (TC 3.A.1.11.1) family. As to quaternary structure, the complex is composed of two ATP-binding proteins (PotA), two transmembrane proteins (PotB and PotC) and a solute-binding protein (PotD).

It localises to the cell membrane. It catalyses the reaction ATP + H2O + polyamine-[polyamine-binding protein]Side 1 = ADP + phosphate + polyamineSide 2 + [polyamine-binding protein]Side 1.. Functionally, part of the ABC transporter complex PotABCD involved in spermidine/putrescine import. Responsible for energy coupling to the transport system. This chain is Spermidine/putrescine import ATP-binding protein PotA, found in Aster yellows witches'-broom phytoplasma (strain AYWB).